Consider the following 435-residue polypeptide: MIPMPKMIRSLLLLFCLLPLGAQAALEIRITQGVEGAMPIAIVPFGWEGPGARPPEDIGAIIQANLHRSGQFSPMEQGRMPQRPTRGQDVNFQVWRGAGVDYVVIGRLVPAGADRFNVQFQLFDTVRGRQVTGYSIPASSSQLRRAAHMASDIIYQQITGVRGAFNTRVAYVSVTREGGEQRFALQVADADGHNPRTIFRSRQPILSPVWSPDGRRLAYVSFENRNSEIYVQDIDGAQRERIASFQGINSAPAWSPDGRRMALTLSRDGQPDIYVMNLADRSLLRVTNSRSIDTEPEWTPDGRNLLFTSDRAGNPQIYEQSLSGGQPRRLTFDGRYNGNPTLSPDGRLVAMVNGDGGRFRIAVLDRQTRQFRLLTDGRLDEAPSFAPNGSMIIYATAGRGGQGELAAVSADGRVRQSLVLQEGEVREPAWSPFLD.

The signal sequence occupies residues 1-24; that stretch reads MIPMPKMIRSLLLLFCLLPLGAQA.

Belongs to the TolB family. The Tol-Pal system is composed of five core proteins: the inner membrane proteins TolA, TolQ and TolR, the periplasmic protein TolB and the outer membrane protein Pal. They form a network linking the inner and outer membranes and the peptidoglycan layer.

The protein localises to the periplasm. Its function is as follows. Part of the Tol-Pal system, which plays a role in outer membrane invagination during cell division and is important for maintaining outer membrane integrity. In Thioalkalivibrio sulfidiphilus (strain HL-EbGR7), this protein is Tol-Pal system protein TolB.